The following is a 553-amino-acid chain: Keratin, type II cytoskeletal 73 (553 aa).

The segment at M1–Q130 is head. The interval E131–L166 is coil 1A. The IF rod domain maps to E131–M444. The tract at residues Q167–H185 is linker 1. Residues I186–M277 are coil 1B. A linker 12 region spans residues Q278–I301. Residues I302 to E440 are coil 2. The tract at residues E441–R539 is tail.

This sequence belongs to the intermediate filament family. In terms of assembly, heterotetramer of two type I and two type II keratins.

Functionally, has a role in hair formation. Specific component of keratin intermediate filaments in the inner root sheath (IRS) of the hair follicle. This chain is Keratin, type II cytoskeletal 73 (Krt73), found in Rattus norvegicus (Rat).